The chain runs to 394 residues: Protein LAX PANICLE 2 (394 aa).

The tract at residues 1-193 (MVPARSLAHP…PTPRHHHHDV (193 aa)) is disordered. Basic residues predominate over residues 8–20 (AHPHPHLVRRRRD). Over residues 60–84 (QHDPPKQPPPREADDDHHRIQEREP) the composition is skewed to basic and acidic residues. 3 stretches are compositionally biased toward low complexity: residues 90–101 (TTTRNQRLQLQL), 119–131 (GTSG…SSSN), and 146–155 (GPASPGASAG). The span at 170–185 (APQPPTPTPTPTPTPT) shows a compositional bias: pro residues.

In terms of assembly, interacts with LAX1.

The protein resides in the nucleus. Its function is as follows. Involved in the regulation of shoot branching by controlling axillary meristem (AM) formation. Functions in association with LAX1 to regulate the process of AM formation. Possesses transactivation activity in yeast. This is Protein LAX PANICLE 2 from Oryza sativa subsp. japonica (Rice).